A 217-amino-acid polypeptide reads, in one-letter code: EF-hand domain-containing protein D2 homolog (217 aa).

The span at 1-28 shows a compositional bias: low complexity; that stretch reads MSVSSNASSASNKDSVDSPSSTTNTDSS. The tract at residues 1-29 is disordered; sequence MSVSSNASSASNKDSVDSPSSTTNTDSSE. 2 consecutive EF-hand domains span residues 69–104 and 105–140; these read NQIKDYQKTFNTYDTARDGFLDLQELKFMMEKLGAP and QTHLGLKQMIAEVDEDNDGKISFREFLLIFRKAQAG. Residues Asp-82, Asp-86, Glu-93, Asp-118, Asp-120, Asp-122, Lys-124, and Glu-129 each contribute to the Ca(2+) site. The segment covering 191–204 has biased composition (basic and acidic residues); the sequence is EQEERRREEEERAQ. The segment at 191 to 217 is disordered; the sequence is EQEERRREEEERAQRRQQFQQRAAIFQ. The span at 206 to 217 shows a compositional bias: low complexity; the sequence is RQQFQQRAAIFQ.

The polypeptide is EF-hand domain-containing protein D2 homolog (Swip-1) (Drosophila melanogaster (Fruit fly)).